The following is a 209-amino-acid chain: Dual specificity phosphatase 29 (209 aa).

In terms of domain architecture, Tyrosine-protein phosphatase spans 45–193; it reads HVNEVWPNLY…LRELDIKLAL (149 aa). 137–144 contacts substrate; sequence NCAMGRSR. C138 acts as the Phosphocysteine intermediate in catalysis.

This sequence belongs to the protein-tyrosine phosphatase family. Non-receptor class dual specificity subfamily.

The protein resides in the cytoplasm. The protein localises to the nucleus. The catalysed reaction is O-phospho-L-tyrosyl-[protein] + H2O = L-tyrosyl-[protein] + phosphate. It catalyses the reaction O-phospho-L-seryl-[protein] + H2O = L-seryl-[protein] + phosphate. It carries out the reaction O-phospho-L-threonyl-[protein] + H2O = L-threonyl-[protein] + phosphate. Dual specificity phosphatase able to dephosphorylate phosphotyrosine, phosphoserine and phosphothreonine residues, with a preference for phosphotyrosine as a substrate. Its function is as follows. Dual specificity phosphatase able to dephosphorylate phosphotyrosine, phosphoserine and phosphothreonine residues within the same substrate, with a preference for phosphotyrosine as a substrate. Involved in the modulation of AMPK and MAPK1/2 signaling pathway. The protein is Dual specificity phosphatase 29 (dusp29) of Xenopus laevis (African clawed frog).